The chain runs to 301 residues: Protein FdhE homolog (301 aa).

The protein belongs to the FdhE family.

It is found in the cytoplasm. Its function is as follows. Necessary for formate dehydrogenase activity. The sequence is that of Protein FdhE homolog from Shewanella baltica (strain OS223).